The primary structure comprises 833 residues: Serine-rich coiled-coil domain-containing protein 2 (833 aa).

Residues 178 to 208 (NRSSGNVQKPRVNSCASRSSSGESLAQSPDN) are disordered. The span at 191 to 208 (SCASRSSSGESLAQSPDN) shows a compositional bias: polar residues. Residue S222 is modified to Phosphoserine. Disordered stretches follow at residues 321–345 (LLKSSRPPFSGPMTVDSNKNPPADM), 424–452 (NRTRITPEEMTLKEEKHESRPSKDIFDSP), 478–508 (KHTSGNNLISPDTDYRAGSSFELSPSDSSDG), and 602–631 (DHYHLSHPGHYHHHGQSDLSRGSPYRESPL). The residue at position 451 (S451) is a Phosphoserine. Residues 496 to 506 (SSFELSPSDSS) show a composition bias toward low complexity. Residues 606-615 (LSHPGHYHHH) are compositionally biased toward basic residues. Residues 711-747 (DQIYKNEDLLNEITQLKEEIKKKDEKIQLLEQQLATR) are a coiled coil. The interval 789–833 (FQGMPRTVPPHRRQTSSTTAFQQPSQIYRPRPGKTNKATTYRGPQ) is disordered. The segment covering 803-814 (TSSTTAFQQPSQ) has biased composition (polar residues).

It belongs to the CCSER family. Expressed in brain (at protein level).

Its subcellular location is the cytoplasm. It is found in the cytoskeleton. Microtubule-binding protein which might play a role in microtubule bundling. This Mus musculus (Mouse) protein is Serine-rich coiled-coil domain-containing protein 2 (Ccser2).